Here is a 458-residue protein sequence, read N- to C-terminus: ATP synthase subunit beta (458 aa).

ATP is bound at residue 148–155; sequence GGAGVGKT.

It belongs to the ATPase alpha/beta chains family. As to quaternary structure, F-type ATPases have 2 components, CF(1) - the catalytic core - and CF(0) - the membrane proton channel. CF(1) has five subunits: alpha(3), beta(3), gamma(1), delta(1), epsilon(1). CF(0) has three main subunits: a(1), b(2) and c(9-12). The alpha and beta chains form an alternating ring which encloses part of the gamma chain. CF(1) is attached to CF(0) by a central stalk formed by the gamma and epsilon chains, while a peripheral stalk is formed by the delta and b chains.

It is found in the cell inner membrane. It catalyses the reaction ATP + H2O + 4 H(+)(in) = ADP + phosphate + 5 H(+)(out). Produces ATP from ADP in the presence of a proton gradient across the membrane. The catalytic sites are hosted primarily by the beta subunits. The sequence is that of ATP synthase subunit beta from Nitrosococcus oceani (strain ATCC 19707 / BCRC 17464 / JCM 30415 / NCIMB 11848 / C-107).